The following is a 78-amino-acid chain: Sec-independent protein translocase protein TatA (78 aa).

Residues 4–21 (SFQHILILLVVVLLLFGR) traverse the membrane as a helical segment. Positions 49–78 (TAKSDSIKTIDNTGKPTNVQANPQRQDSTV) are disordered. Positions 57 to 78 (TIDNTGKPTNVQANPQRQDSTV) are enriched in polar residues.

The protein belongs to the TatA/E family. In terms of assembly, the Tat system comprises two distinct complexes: a TatABC complex, containing multiple copies of TatA, TatB and TatC subunits, and a separate TatA complex, containing only TatA subunits. Substrates initially bind to the TatABC complex, which probably triggers association of the separate TatA complex to form the active translocon.

It is found in the cell inner membrane. Part of the twin-arginine translocation (Tat) system that transports large folded proteins containing a characteristic twin-arginine motif in their signal peptide across membranes. TatA could form the protein-conducting channel of the Tat system. The protein is Sec-independent protein translocase protein TatA of Afipia carboxidovorans (strain ATCC 49405 / DSM 1227 / KCTC 32145 / OM5) (Oligotropha carboxidovorans).